The sequence spans 545 residues: MAAKEVKFNSDARDRMLKGVNILADAVKVTLGPKGRNVVIDKSFGAPRITKDGVSVAKEIELSDKFENMGAQMVREVASRTNDEAGDGTTTATVLAQAIVREGLKAVAAGMNPMDLKRGIDVATAKVVEAIKSAARPVNDSSEVAQVGTISANGESFIGQQIAEAMQRVGNEGVITVEENKGMETEVEVVEGMQFDRGYLSPYFVTNADKMIAELEDAYILLHEKKLSSLQPMVPLLESVIQSQKPLLIVAEDVEGEALATLVVNKLRGGLKIAAVKAPGFGDRRKAMLQDIAILTGGQVISEDLGMKLENVTIDMLGRAKKVSINKDNTTIVDGAGEKAEIEARVSQIRQQIEETTSDYDREKLQERVAKLAGGVAVIRVGGMTEIEVKERKDRVDDALNATRAAVQEGIVVGGGVALVQGAKVLEGLSGANSDQDAGIAIIRRALEAPMRQIAENAGVDGAVVAGKVRESSDKAFGFNAQTEEYGDMFKFGVIDPAKVVRTALEDAASVAGLLITTEAMIAEKPEPKAPAGGMPDMGGMGGMM.

Residues 30–33 (TLGP), Lys-51, 87–91 (DGTTT), Gly-415, and Asp-496 each bind ATP. Positions 526 to 545 (PEPKAPAGGMPDMGGMGGMM) are disordered. Residues 536–545 (PDMGGMGGMM) show a composition bias toward gly residues.

The protein belongs to the chaperonin (HSP60) family. In terms of assembly, forms a cylinder of 14 subunits composed of two heptameric rings stacked back-to-back. Interacts with the co-chaperonin GroES.

The protein localises to the cytoplasm. The enzyme catalyses ATP + H2O + a folded polypeptide = ADP + phosphate + an unfolded polypeptide.. Together with its co-chaperonin GroES, plays an essential role in assisting protein folding. The GroEL-GroES system forms a nano-cage that allows encapsulation of the non-native substrate proteins and provides a physical environment optimized to promote and accelerate protein folding. This Paracoccus denitrificans (strain Pd 1222) protein is Chaperonin GroEL.